The primary structure comprises 503 residues: NAD(P)H-quinone oxidoreductase chain 4, chloroplastic (503 aa).

A run of 14 helical transmembrane segments spans residues 3 to 23 (FFPW…IVFF), 37 to 57 (LCIC…HFQV), 84 to 104 (GLSV…TLAA), 113 to 130 (LFHF…GLFA), 134 to 154 (LFLF…LLSM), 167 to 187 (FILY…GLTL), 208 to 228 (ALEI…SPIL), 242 to 262 (HYST…YGLI), 274 to 294 (SLFS…AALT), 305 to 325 (IAYS…SMTD), 330 to 350 (GALL…FLAG), 385 to 405 (SLAL…FGII), 416 to 436 (ILIS…SLSM), and 462 to 482 (LFLS…PDFV).

The protein belongs to the complex I subunit 4 family.

The protein localises to the plastid. It localises to the chloroplast thylakoid membrane. The catalysed reaction is a plastoquinone + NADH + (n+1) H(+)(in) = a plastoquinol + NAD(+) + n H(+)(out). It carries out the reaction a plastoquinone + NADPH + (n+1) H(+)(in) = a plastoquinol + NADP(+) + n H(+)(out). This Ipomoea purpurea (Common morning glory) protein is NAD(P)H-quinone oxidoreductase chain 4, chloroplastic.